Here is an 82-residue protein sequence, read N- to C-terminus: DNA-directed RNA polymerase subunit omega (82 aa).

Belongs to the RNA polymerase subunit omega family. The RNAP catalytic core consists of 2 alpha, 1 beta, 1 beta' and 1 omega subunit. When a sigma factor is associated with the core the holoenzyme is formed, which can initiate transcription.

It catalyses the reaction RNA(n) + a ribonucleoside 5'-triphosphate = RNA(n+1) + diphosphate. Its function is as follows. Promotes RNA polymerase assembly. Latches the N- and C-terminal regions of the beta' subunit thereby facilitating its interaction with the beta and alpha subunits. The sequence is that of DNA-directed RNA polymerase subunit omega from Lacticaseibacillus casei (strain BL23) (Lactobacillus casei).